Here is a 270-residue protein sequence, read N- to C-terminus: Aquaporin-11 (270 aa).

2 helical membrane-spanning segments follow: residues 5 to 25 (IMTM…ISIC) and 59 to 79 (FELG…GLFF). The NPA 1 motif lies at 94–96 (DPS). The helical transmembrane segment at 120 to 140 (IMGAAVSYRFAKIFWSFGLMA) threads the bilayer. N148 carries N-linked (GlcNAc...) asparagine glycosylation. The next 2 membrane-spanning stretches (helical) occupy residues 153–173 (ASLQ…TIVN) and 184–204 (MLIS…VSGG). Positions 207–209 (NPT) match the NPA 2 motif. A helical membrane pass occupies residues 220–240 (GLSGPSFFLVYWFGPILGSSI).

The protein belongs to the MIP/aquaporin (TC 1.A.8) family.

The protein resides in the membrane. The enzyme catalyses H2O(in) = H2O(out). Functionally, probable intracellular unorthodox aquaporin that may modulate the water content and osmolytes during anhydrobiosis. This chain is Aquaporin-11, found in Milnesium tardigradum (Water bear).